We begin with the raw amino-acid sequence, 374 residues long: Zinc finger CCCH domain-containing protein 15 homolog (374 aa).

The disordered stretch occupies residues M1–V20. Basic and acidic residues predominate over residues K10 to V20. 2 consecutive C3H1-type zinc fingers follow at residues D90–A117 and V166–P199.

It belongs to the ZC3H15/TMA46 family.

The chain is Zinc finger CCCH domain-containing protein 15 homolog from Caenorhabditis elegans.